The primary structure comprises 440 residues: Streptokinase (440 aa).

A signal peptide spans 1–26 (MKNYLSFGMFALLFALTFGTVKPVQA). Residues 72 to 94 (PAQGGKTEQGLRPKSKPLATDKG) are disordered.

This protein is not a protease, but it activates plasminogen by complexing with it. As a potential virulence factor, it is thought to prevent the formation of effective fibrin barriers around the site of infection, thereby contributing to the invasiveness of the cells. The polypeptide is Streptokinase (ska) (Streptococcus pyogenes).